Here is a 478-residue protein sequence, read N- to C-terminus: PRAME family member 26 (478 aa).

The LRR 1; degenerate repeat unit spans residues 99 to 126 (RWKLQVLDLQDVCENFWMVWSEAMARGC). An LRR 2; degenerate repeat occupies 181 to 205 (HLCCKKLKILGMPFRNIRSILKMVN). The LRR 3; degenerate repeat unit spans residues 206–232 (LDCIQEVEVNCKWVLPILTQFTPYLGH). The stretch at 233-268 (MRNLQKLVLSHMDVSRYVSPEQKKEIVTQFTTQFLK) is one LRR 4; degenerate repeat. 5 LRR repeats span residues 269–294 (LHCL…LSCL), 295–326 (KTSL…SQLK), 327–347 (TLDL…QILL), 351–378 (AATL…ALSR), and 379–403 (CFEL…LLSH).

The protein belongs to the PRAME family.

The protein is PRAME family member 26 of Homo sapiens (Human).